The chain runs to 191 residues: GTP-dependent dephospho-CoA kinase (191 aa).

Residues Asp46, Asp65, Lys67, and Glu122 each coordinate GTP.

The protein belongs to the GTP-dependent DPCK family.

It carries out the reaction 3'-dephospho-CoA + GTP = GDP + CoA + H(+). The protein operates within cofactor biosynthesis; coenzyme A biosynthesis. Its function is as follows. Catalyzes the GTP-dependent phosphorylation of the 3'-hydroxyl group of dephosphocoenzyme A to form coenzyme A (CoA). The chain is GTP-dependent dephospho-CoA kinase from Methanopyrus kandleri (strain AV19 / DSM 6324 / JCM 9639 / NBRC 100938).